Here is a 238-residue protein sequence, read N- to C-terminus: Purine nucleoside phosphorylase DeoD-type (238 aa).

His-4 contacts a purine D-ribonucleoside. Residues Gly-20, Arg-24, Arg-43, and Arg-87–Ser-90 contribute to the phosphate site. A purine D-ribonucleoside-binding positions include Glu-179–Glu-181 and Ser-203–Asp-204. The Proton donor role is filled by Asp-204.

It belongs to the PNP/UDP phosphorylase family. As to quaternary structure, homohexamer; trimer of homodimers.

The catalysed reaction is a purine D-ribonucleoside + phosphate = a purine nucleobase + alpha-D-ribose 1-phosphate. The enzyme catalyses a purine 2'-deoxy-D-ribonucleoside + phosphate = a purine nucleobase + 2-deoxy-alpha-D-ribose 1-phosphate. Functionally, catalyzes the reversible phosphorolytic breakdown of the N-glycosidic bond in the beta-(deoxy)ribonucleoside molecules, with the formation of the corresponding free purine bases and pentose-1-phosphate. The chain is Purine nucleoside phosphorylase DeoD-type from Mannheimia succiniciproducens (strain KCTC 0769BP / MBEL55E).